Consider the following 280-residue polypeptide: Gastrula zinc finger protein XlCGF46.1 (280 aa).

10 C2H2-type zinc fingers span residues phenylalanine 6–histidine 28, phenylalanine 34–histidine 56, phenylalanine 62–histidine 84, phenylalanine 90–histidine 112, phenylalanine 118–histidine 140, tyrosine 146–histidine 168, phenylalanine 174–histidine 196, phenylalanine 202–histidine 224, phenylalanine 230–histidine 252, and tyrosine 258–histidine 280.

The protein belongs to the krueppel C2H2-type zinc-finger protein family.

Its subcellular location is the nucleus. In terms of biological role, may be involved in transcriptional regulation. The polypeptide is Gastrula zinc finger protein XlCGF46.1 (Xenopus laevis (African clawed frog)).